The sequence spans 365 residues: Aminomethyltransferase (365 aa).

It belongs to the GcvT family. In terms of assembly, the glycine cleavage system is composed of four proteins: P, T, L and H.

It carries out the reaction N(6)-[(R)-S(8)-aminomethyldihydrolipoyl]-L-lysyl-[protein] + (6S)-5,6,7,8-tetrahydrofolate = N(6)-[(R)-dihydrolipoyl]-L-lysyl-[protein] + (6R)-5,10-methylene-5,6,7,8-tetrahydrofolate + NH4(+). Functionally, the glycine cleavage system catalyzes the degradation of glycine. The protein is Aminomethyltransferase of Yersinia pestis bv. Antiqua (strain Antiqua).